A 431-amino-acid chain; its full sequence is 3-phosphoshikimate 1-carboxyvinyltransferase (431 aa).

3-phosphoshikimate contacts are provided by lysine 23, serine 24, and arginine 28. Lysine 23 serves as a coordination point for phosphoenolpyruvate. Phosphoenolpyruvate is bound by residues glycine 96 and arginine 124. Residues serine 169, glutamine 171, aspartate 317, and lysine 344 each contribute to the 3-phosphoshikimate site. Residue glutamine 171 coordinates phosphoenolpyruvate. The Proton acceptor role is filled by aspartate 317. Phosphoenolpyruvate is bound by residues arginine 348 and arginine 390.

This sequence belongs to the EPSP synthase family. Monomer.

It localises to the cytoplasm. The enzyme catalyses 3-phosphoshikimate + phosphoenolpyruvate = 5-O-(1-carboxyvinyl)-3-phosphoshikimate + phosphate. Its pathway is metabolic intermediate biosynthesis; chorismate biosynthesis; chorismate from D-erythrose 4-phosphate and phosphoenolpyruvate: step 6/7. In terms of biological role, catalyzes the transfer of the enolpyruvyl moiety of phosphoenolpyruvate (PEP) to the 5-hydroxyl of shikimate-3-phosphate (S3P) to produce enolpyruvyl shikimate-3-phosphate and inorganic phosphate. The sequence is that of 3-phosphoshikimate 1-carboxyvinyltransferase from Syntrophotalea carbinolica (strain DSM 2380 / NBRC 103641 / GraBd1) (Pelobacter carbinolicus).